Here is a 145-residue protein sequence, read N- to C-terminus: 3-dehydroquinate dehydratase (145 aa).

Tyr22 (proton acceptor) is an active-site residue. Substrate is bound by residues Asn71, His77, and Asp84. Residue His97 is the Proton donor of the active site. Residues 98-99 (IS) and Arg108 contribute to the substrate site.

It belongs to the type-II 3-dehydroquinase family. Homododecamer.

The enzyme catalyses 3-dehydroquinate = 3-dehydroshikimate + H2O. The protein operates within metabolic intermediate biosynthesis; chorismate biosynthesis; chorismate from D-erythrose 4-phosphate and phosphoenolpyruvate: step 3/7. Functionally, catalyzes a trans-dehydration via an enolate intermediate. The polypeptide is 3-dehydroquinate dehydratase (Exiguobacterium sp. (strain ATCC BAA-1283 / AT1b)).